A 124-amino-acid polypeptide reads, in one-letter code: MSQQASTELTIEEGELPTRFEIELEFVQSLANIPYVTYLLTQLQLWQDPKFKRYLKYLEYWHEPEYAQCIVYPNSLFVLKLLNTLFEGSTVNENGVLEGCEHVPRILQTQGTQWMNEMVERWRE.

The protein belongs to the Mediator complex subunit 31 family. In terms of assembly, component of the Mediator complex.

The protein resides in the nucleus. In terms of biological role, component of the Mediator complex, a coactivator involved in the regulated transcription of nearly all RNA polymerase II-dependent genes. Mediator functions as a bridge to convey information from gene-specific regulatory proteins to the basal RNA polymerase II transcription machinery. Mediator is recruited to promoters by direct interactions with regulatory proteins and serves as a scaffold for the assembly of a functional preinitiation complex with RNA polymerase II and the general transcription factors. This is Mediator of RNA polymerase II transcription subunit 31 (SOH1) from Kluyveromyces lactis (strain ATCC 8585 / CBS 2359 / DSM 70799 / NBRC 1267 / NRRL Y-1140 / WM37) (Yeast).